Consider the following 365-residue polypeptide: Chorismate synthase (365 aa).

The NADP(+) site is built by Arg-48 and Arg-54. FMN is bound by residues 131–133 (RSS), 243–244 (NA), Gly-288, 303–307 (KPTSS), and Arg-329.

This sequence belongs to the chorismate synthase family. In terms of assembly, homotetramer. It depends on FMNH2 as a cofactor.

It catalyses the reaction 5-O-(1-carboxyvinyl)-3-phosphoshikimate = chorismate + phosphate. The protein operates within metabolic intermediate biosynthesis; chorismate biosynthesis; chorismate from D-erythrose 4-phosphate and phosphoenolpyruvate: step 7/7. Functionally, catalyzes the anti-1,4-elimination of the C-3 phosphate and the C-6 proR hydrogen from 5-enolpyruvylshikimate-3-phosphate (EPSP) to yield chorismate, which is the branch point compound that serves as the starting substrate for the three terminal pathways of aromatic amino acid biosynthesis. This reaction introduces a second double bond into the aromatic ring system. This Agrobacterium fabrum (strain C58 / ATCC 33970) (Agrobacterium tumefaciens (strain C58)) protein is Chorismate synthase.